A 445-amino-acid polypeptide reads, in one-letter code: Flagellum-associated coiled-coil domain-containing protein 1 (445 aa).

Residues 26–47 form a disordered region; the sequence is PQLPRKNSTGSSKLTPLVPAPK. Over residues 30-39 the composition is skewed to polar residues; it reads RKNSTGSSKL. 2 coiled-coil regions span residues 122–226 and 283–315; these read SRTN…TYQD and AVFENFIQEKEELLKQHQSDTLQLEELRKTKEV. Residue K376 is modified to N6-acetyllysine. A coiled-coil region spans residues 387 to 414; it reads EKYKHTIQILTEENIHLKQKIISKNEEI.

It is found in the cytoplasm. The protein resides in the cytoplasmic granule. It localises to the cell projection. The protein localises to the cilium. Its subcellular location is the flagellum. The protein is Flagellum-associated coiled-coil domain-containing protein 1 of Homo sapiens (Human).